Here is a 341-residue protein sequence, read N- to C-terminus: tRNA N6-adenosine threonylcarbamoyltransferase (341 aa).

The Fe cation site is built by His111 and His115. Residues 134 to 138, Asp167, Gly180, and Asn277 contribute to the substrate site; that span reads LVSGG. Position 305 (Asp305) interacts with Fe cation.

The protein belongs to the KAE1 / TsaD family. It depends on Fe(2+) as a cofactor.

Its subcellular location is the cytoplasm. The catalysed reaction is L-threonylcarbamoyladenylate + adenosine(37) in tRNA = N(6)-L-threonylcarbamoyladenosine(37) in tRNA + AMP + H(+). Functionally, required for the formation of a threonylcarbamoyl group on adenosine at position 37 (t(6)A37) in tRNAs that read codons beginning with adenine. Is involved in the transfer of the threonylcarbamoyl moiety of threonylcarbamoyl-AMP (TC-AMP) to the N6 group of A37, together with TsaE and TsaB. TsaD likely plays a direct catalytic role in this reaction. In Chromobacterium violaceum (strain ATCC 12472 / DSM 30191 / JCM 1249 / CCUG 213 / NBRC 12614 / NCIMB 9131 / NCTC 9757 / MK), this protein is tRNA N6-adenosine threonylcarbamoyltransferase.